Here is a 353-residue protein sequence, read N- to C-terminus: Protein arginine N-methyltransferase 1 (353 aa).

The 322-residue stretch at 32–353 (KDYYFDSYAH…LSCSTDYRMR (322 aa)) folds into the SAM-dependent MTase PRMT-type domain. 4 residues coordinate S-adenosyl-L-methionine: His45, Arg54, Gly78, and Glu100. Residue Lys116 is modified to N6-succinyllysine. Lys127 participates in a covalent cross-link: Glycyl lysine isopeptide (Lys-Gly) (interchain with G-Cter in ubiquitin). Residue Glu129 coordinates S-adenosyl-L-methionine. Catalysis depends on residues Glu144 and Glu153. N6-acetyllysine is present on residues Lys210 and Lys215. 2 positions are modified to phosphoserine: Ser286 and Ser289.

The protein belongs to the class I-like SAM-binding methyltransferase superfamily. Protein arginine N-methyltransferase family. Homodimer and heterodimer with PRMT8. Homooctamer; individual homodimers associates to form a homooctamer. Interacts with NFATC2IP. Interacts with ILF3 and SUPT5H. Individual homodimers can associate to form a homohexamer. Interacts with FOXO1; the interaction methylates FOXO1, retaining it in the nucleus and increasing its transcriptional activity. Methylation of FOXO1 is increased with oxidative stress. Interacts with CHTOP; the interaction methylates CHTOP, enabling its interaction with the 5FMC complex. Interacts with BTG1, BTG2 and IFNAR1. Interacts with and probably methylates ATXN2L. Component of the methylosome, a 20S complex containing at least CLNS1A/pICln, PRMT5/SKB1, WDR77/MEP50, PRMT1 and ERH. Interacts with DHX9 (via RGG region). Interacts (via N-terminus) with HABP4. Interacts with MAP3K5/ASK1; the interaction results in MAP3K5 methylation by PRMT1 which inhibits MAP3K5 activation. Interacts with TRIM48; the interaction results in ubiquitination of PRMT1 by TRIM48, leading to PRMT1 proteasomal degradation and activation of MAP3K5. Interacts with GATOR1 complex; this interaction is S-adenosyl-L-methionine (SAM) dependent and is perturbated by SAMTOR in a SAM-sensitive manner. Interacts with GFI1; promoting recognition and binding of MRE11 and TP53BP1 substrates by PRMT1. In terms of processing, polyubiquitinated at Lys-127 by the SCF(FBXL17) complex, leading to its subsequent degradation. Ubiquitination is regulated by acetylation at Lys-210 and Lys-215. Polyubiquitinated by E3 ubiquitin-protein ligase TRIM48, leading to suppression of MAP3K5/ASK1 methylation and subsequent MAP3K5 activation. Post-translationally, acetylation at Lys-210 and Lys-215 regulates ubiquitination by the SCF(FBXL17) complex. Acetylated at Lys-215 by p300/EP300. Deacetylated at Lys-210 and Lys-215 by SIRT1. In terms of tissue distribution, ubiquitous.

It localises to the nucleus. It is found in the nucleoplasm. The protein localises to the cytoplasm. The protein resides in the cytosol. Its subcellular location is the lysosome membrane. It catalyses the reaction L-arginyl-[protein] + 2 S-adenosyl-L-methionine = N(omega),N(omega)-dimethyl-L-arginyl-[protein] + 2 S-adenosyl-L-homocysteine + 2 H(+). The catalysed reaction is L-arginyl-[protein] + S-adenosyl-L-methionine = N(omega)-methyl-L-arginyl-[protein] + S-adenosyl-L-homocysteine + H(+). The enzyme catalyses N(omega)-methyl-L-arginyl-[protein] + S-adenosyl-L-methionine = N(omega),N(omega)-dimethyl-L-arginyl-[protein] + S-adenosyl-L-homocysteine + H(+). Its function is as follows. Arginine methyltransferase that methylates (mono and asymmetric dimethylation) the guanidino nitrogens of arginyl residues present in proteins such as ESR1, histone H2, H3 and H4, FMR1, ILF3, HNRNPA1, HNRNPD, NFATC2IP, SUPT5H, TAF15, EWS, HABP4, SERBP1, RBM15, FOXO1, CHTOP, MAP3K5/ASK1 and MICU1. Constitutes the main enzyme that mediates monomethylation and asymmetric dimethylation of histone H4 'Arg-3' (H4R3me1 and H4R3me2a, respectively), a specific tag for epigenetic transcriptional activation. May be involved in the regulation of TAF15 transcriptional activity, act as an activator of estrogen receptor (ER)-mediated transactivation, play a key role in neurite outgrowth and act as a negative regulator of megakaryocytic differentiation, by modulating p38 MAPK pathway. Methylates RBM15, promoting ubiquitination and degradation of RBM15. Methylates MRE11 and TP53BP1, promoting the DNA damage response. Methylates FOXO1 and retains it in the nucleus increasing its transcriptional activity. Methylates CHTOP and this methylation is critical for its 5-hydroxymethylcytosine (5hmC)-binding activity. Methylates MAP3K5/ASK1 at 'Arg-85' and 'Arg-87' which promotes association of MAP3K5 with thioredoxin and negatively regulates MAP3K5 association with TRAF2, inhibiting MAP3K5 stimulation and MAP3K5-induced activation of JNK. Methylates H4R3 in genes involved in glioblastomagenesis in a CHTOP- and/or TET1-dependent manner. Plays a role in regulating alternative splicing in the heart. Methylates NPRL2 at 'Arg-78' leading to inhibition of its GTPase activator activity and then the GATOR1 complex and consequently inducing timely mTORC1 activation under methionine-sufficient conditions. The chain is Protein arginine N-methyltransferase 1 from Rattus norvegicus (Rat).